Here is a 738-residue protein sequence, read N- to C-terminus: AP-4 complex subunit beta-1 (738 aa).

The interval 534–600 is hinge; that stretch reads CSPKSDPSLG…NASFATSGHL (67 aa). The interval 601-738 is ear; mediates interaction with TEPSIN; sequence ISEENKEGAQ…VIGTVGDIKS (138 aa).

The protein belongs to the adaptor complexes large subunit family. As to quaternary structure, adaptor protein complex 4 (AP-4) is a heterotetramer composed of two large adaptins (epsilon-type subunit AP4E1 and beta-type subunit AP4B1), a medium adaptin (mu-type subunit AP4M1) and a small adaptin (sigma-type AP4S1). Interacts with TEPSIN; this interaction requires the presence of a functional AP-4 complex. Interacts with GRIA2; probably indirect it mediates the somatodendritic localization of GRIA2 in neurons.

The protein localises to the golgi apparatus. The protein resides in the trans-Golgi network membrane. Component of the adaptor protein complex 4 (AP-4). Adaptor protein complexes are vesicle coat components involved both in vesicle formation and cargo selection. They control the vesicular transport of proteins in different trafficking pathways. AP-4 forms a non clathrin-associated coat on vesicles departing the trans-Golgi network (TGN) and may be involved in the targeting of proteins from the trans-Golgi network (TGN) to the endosomal-lysosomal system. It is also involved in protein sorting to the basolateral membrane in epithelial cells and the proper asymmetric localization of somatodendritic proteins in neurons. AP-4 is involved in the recognition and binding of tyrosine-based sorting signals found in the cytoplasmic part of cargos, but may also recognize other types of sorting signal. This is AP-4 complex subunit beta-1 from Mus musculus (Mouse).